A 572-amino-acid polypeptide reads, in one-letter code: 2-isopropylmalate synthase (572 aa).

The region spanning 31-305 is the Pyruvate carboxyltransferase domain; the sequence is PIWMSTDLRD…DPGLDFSNIN (275 aa). Residues Asp-40, His-244, His-246, and Asn-280 each coordinate Mg(2+). The tract at residues 437–572 is regulatory domain; the sequence is NATPVHYVGH…MNDATESVGV (136 aa).

Belongs to the alpha-IPM synthase/homocitrate synthase family. LeuA type 2 subfamily. As to quaternary structure, homodimer. Requires Mg(2+) as cofactor.

The protein localises to the cytoplasm. The enzyme catalyses 3-methyl-2-oxobutanoate + acetyl-CoA + H2O = (2S)-2-isopropylmalate + CoA + H(+). It participates in amino-acid biosynthesis; L-leucine biosynthesis; L-leucine from 3-methyl-2-oxobutanoate: step 1/4. In terms of biological role, catalyzes the condensation of the acetyl group of acetyl-CoA with 3-methyl-2-oxobutanoate (2-ketoisovalerate) to form 3-carboxy-3-hydroxy-4-methylpentanoate (2-isopropylmalate). This Paraburkholderia xenovorans (strain LB400) protein is 2-isopropylmalate synthase.